Reading from the N-terminus, the 745-residue chain is Arf-GAP with coiled-coil, ANK repeat and PH domain-containing protein 1 (745 aa).

The BAR domain maps to 1 to 226 (MTVKLDFEEC…RKELGGQLHQ (226 aa)). Positions 1 to 382 (MTVKLDFEEC…RGLGQGSGHL (382 aa)) are required for formation of endosomal tubules when overexpressed with PIP5K1C. A PH domain is found at 265–360 (GLVMEGHLFK…WVSAVQSSIA (96 aa)). One can recognise an Arf-GAP domain in the interval 405 to 527 (GHVAAQVQSV…KFLTKLPEIR (123 aa)). Residues 405–745 (GHVAAQVQSV…SRRSHDLHTL (341 aa)) form a required for interaction with GULP1 region. A C4-type zinc finger spans residues 420-443 (CCDCREPAPEWASINLGVTLCIQC). Tyr485 bears the 3'-nitrotyrosine mark. The prevents interaction with ITGB1 when S-554 is not phosphorylated stretch occupies residues 525–567 (EIRGRRGGRGPPRGHPPVPPKPGLIRPKPGSFRSKPEPPSEDL). The disordered stretch occupies residues 525-569 (EIRGRRGGRGPPRGHPPVPPKPGLIRPKPGSFRSKPEPPSEDLQS). Over residues 537–546 (RGHPPVPPKP) the composition is skewed to pro residues. Position 555 is a phosphoserine; by PKB (Ser555). 3 ANK repeats span residues 607-640 (ENATPLIQATAAVRVLNSLLACEFLLQNGANVNQ), 644-673 (QGRGPLHHATILGHTGLACLFLKRGADLGV), and 677-707 (EGRDPLTIAVETANADIVTLLRLAKMREADA).

In terms of assembly, banana-shaped homodimer laterally assembling into tetramers, the tetramers further pack helically onto the membrane. Interacts with GTP-bound ARF6. Interacts with third cytoplasmic loop of SLC2A4/GLUT4. Interacts with CLTC. Interacts with GULP1. Forms a complex with GDP-bound ARF6 and GULP1. Interacts with ITGB1; required for ITGB1 recycling. Post-translationally, phosphorylation at Ser-555 by PKB is required for interaction with ITGB1, export of ITGB1 from recycling endosomes to the cell surface and ITGB1-dependent cell migration.

It localises to the recycling endosome membrane. GAP activity stimulated by phosphatidylinositol 4,5-bisphosphate (PIP2) and phosphatidic acid. GTPase-activating protein (GAP) for ADP ribosylation factor 6 (ARF6) required for clathrin-dependent export of proteins from recycling endosomes to trans-Golgi network and cell surface. Required for regulated export of ITGB1 from recycling endosomes to the cell surface and ITGB1-dependent cell migration. The chain is Arf-GAP with coiled-coil, ANK repeat and PH domain-containing protein 1 (ACAP1) from Bos taurus (Bovine).